We begin with the raw amino-acid sequence, 217 residues long: Large ribosomal subunit protein uL1A (217 aa).

The residue at position 2 (Ser2) is an N-acetylserine. Lys47 is modified (N6-methyllysine; by RKM5). Phosphoserine is present on residues Ser79 and Ser86.

Belongs to the universal ribosomal protein uL1 family. Component of the large ribosomal subunit (LSU). Mature yeast ribosomes consist of a small (40S) and a large (60S) subunit. The 40S small subunit contains 1 molecule of ribosomal RNA (18S rRNA) and 33 different proteins (encoded by 57 genes). The large 60S subunit contains 3 rRNA molecules (25S, 5.8S and 5S rRNA) and 46 different proteins (encoded by 81 genes). uL1 forms part of the L1 stalk. N-terminally acetylated by acetyltransferase NatA.

It is found in the cytoplasm. In terms of biological role, component of the ribosome, a large ribonucleoprotein complex responsible for the synthesis of proteins in the cell. The small ribosomal subunit (SSU) binds messenger RNAs (mRNAs) and translates the encoded message by selecting cognate aminoacyl-transfer RNA (tRNA) molecules. The large subunit (LSU) contains the ribosomal catalytic site termed the peptidyl transferase center (PTC), which catalyzes the formation of peptide bonds, thereby polymerizing the amino acids delivered by tRNAs into a polypeptide chain. The nascent polypeptides leave the ribosome through a tunnel in the LSU and interact with protein factors that function in enzymatic processing, targeting, and the membrane insertion of nascent chains at the exit of the ribosomal tunnel. uL1 forms part of the L1 stalk, a mobile element that plays a role in evacuating the exit-site tRNA. The polypeptide is Large ribosomal subunit protein uL1A (Saccharomyces cerevisiae (strain ATCC 204508 / S288c) (Baker's yeast)).